The primary structure comprises 106 residues: Large ribosomal subunit protein eL42 (106 aa).

The protein belongs to the eukaryotic ribosomal protein eL42 family.

The sequence is that of Large ribosomal subunit protein eL42 (RPL44) from Eremothecium gossypii (strain ATCC 10895 / CBS 109.51 / FGSC 9923 / NRRL Y-1056) (Yeast).